A 663-amino-acid polypeptide reads, in one-letter code: Protein associated with UVRAG as autophagy enhancer (663 aa).

Disordered stretches follow at residues 1–36 and 65–136; these read MVSQ…LDTE and DASP…EERA. Composition is skewed to polar residues over residues 80-93 and 105-130; these read TASN…TSPL and PKGT…SSVT. The interaction with UVRAG stretch occupies residues 196–235; the sequence is EAFVLPVDAEKENAHFYVADMIISVMEKMKCNILSQQHTE. An N6-acetyllysine mark is found at Lys484, Lys534, Lys574, and Lys634.

Interacts with UVRAG; the interaction is direct and promotes association with the PI3K/PI3KC3 and HOPS complexes. Interacts with STX17. Post-translationally, acetylated by KAT5/TIP60 under autophagy induction, promoting autophagosome maturation and lipid metabolism. Lys-484 and Lys-574 constitute the key sites for tuning function in autophagy.

It localises to the cytoplasmic vesicle. The protein localises to the autophagosome membrane. Regulator of autophagy that promotes autophagosome maturation by facilitating the biogenesis of phosphatidylinositol 3-phosphate (PtdIns(3)P) in late steps of autophagy. Acts by antagonizing RUBCN, thereby stimulating phosphatidylinositol 3-kinase activity of the PI3K/PI3KC3 complex. Following anchorage to the autophagosomal SNARE STX17, promotes the recruitment of PI3K/PI3KC3 and HOPS complexes to the autophagosome to regulate the fusion specificity of autophagosomes with late endosomes/lysosomes. Binds phosphoinositides phosphatidylinositol 3-phosphate (PtdIns(3)P), 4-phosphate (PtdIns(4)P) and 5-phosphate (PtdIns(5)P). In addition to its role in autophagy, acts as a regulator of lipid and glycogen homeostasis. May act as a tumor suppressor. This Bos taurus (Bovine) protein is Protein associated with UVRAG as autophagy enhancer.